The following is a 400-amino-acid chain: Tyrosine-specific transport system 1 (400 aa).

The next 12 helical transmembrane spans lie at 5 to 25, 34 to 54, 80 to 100, 117 to 137, 143 to 163, 176 to 196, 211 to 231, 250 to 270, 273 to 293, 313 to 333, 335 to 355, and 370 to 390; these read VGST…AMPL, FTLV…LLFV, IIAT…YISG, VSVL…THSV, VLFF…LPEI, ALII…GSIP, FSIL…QLST, LNGL…ASAV, FSTL…LECI, LTFI…ILAL, YAGQ…VWKA, and NLTL…PFAI.

Belongs to the amino acid/polyamine transporter 2 family. Mtr/TnaB/TyrP permease subfamily.

It localises to the cell inner membrane. It catalyses the reaction L-tyrosine(in) + H(+)(in) = L-tyrosine(out) + H(+)(out). Functionally, transports tyrosine across the cytoplasmic membrane. The transport system is energized by the proton motive force. This chain is Tyrosine-specific transport system 1 (tyrP-A), found in Haemophilus influenzae (strain ATCC 51907 / DSM 11121 / KW20 / Rd).